We begin with the raw amino-acid sequence, 186 residues long: Large ribosomal subunit protein bL9 (186 aa).

Over residues 151-167 the composition is skewed to basic and acidic residues; sequence PEEAEKQARGEAIMREE. The interval 151–186 is disordered; that stretch reads PEEAEKQARGEAIMREESEYELETGEEVAEGPEQTA. The segment covering 168-180 has biased composition (acidic residues); sequence SEYELETGEEVAE.

The protein belongs to the bacterial ribosomal protein bL9 family.

Its function is as follows. Binds to the 23S rRNA. This is Large ribosomal subunit protein bL9 from Acidiphilium cryptum (strain JF-5).